The primary structure comprises 624 residues: Dihydroxy-acid dehydratase (624 aa).

Residue Asp81 participates in Mg(2+) binding. [2Fe-2S] cluster is bound at residue Cys122. Asp123 and Lys124 together coordinate Mg(2+). Residue Lys124 is modified to N6-carboxylysine. Residue Cys195 coordinates [2Fe-2S] cluster. Position 499 (Glu499) interacts with Mg(2+). Residue Ser525 is the Proton acceptor of the active site.

Belongs to the IlvD/Edd family. Homodimer. Requires [2Fe-2S] cluster as cofactor. Mg(2+) serves as cofactor.

The enzyme catalyses (2R)-2,3-dihydroxy-3-methylbutanoate = 3-methyl-2-oxobutanoate + H2O. It carries out the reaction (2R,3R)-2,3-dihydroxy-3-methylpentanoate = (S)-3-methyl-2-oxopentanoate + H2O. It functions in the pathway amino-acid biosynthesis; L-isoleucine biosynthesis; L-isoleucine from 2-oxobutanoate: step 3/4. The protein operates within amino-acid biosynthesis; L-valine biosynthesis; L-valine from pyruvate: step 3/4. Its function is as follows. Functions in the biosynthesis of branched-chain amino acids. Catalyzes the dehydration of (2R,3R)-2,3-dihydroxy-3-methylpentanoate (2,3-dihydroxy-3-methylvalerate) into 2-oxo-3-methylpentanoate (2-oxo-3-methylvalerate) and of (2R)-2,3-dihydroxy-3-methylbutanoate (2,3-dihydroxyisovalerate) into 2-oxo-3-methylbutanoate (2-oxoisovalerate), the penultimate precursor to L-isoleucine and L-valine, respectively. In Shewanella baltica (strain OS155 / ATCC BAA-1091), this protein is Dihydroxy-acid dehydratase.